Consider the following 530-residue polypeptide: Ubiquitin carboxyl-terminal hydrolase 17-like protein 1 (530 aa).

The USP domain occupies 80 to 375; sequence AGLQNMGNTC…QAYVLFYIQK (296 aa). Cys89 (nucleophile) is an active-site residue. His334 (proton acceptor) is an active-site residue. Composition is skewed to basic and acidic residues over residues 382–392 and 398–411; these read SESVSRGREPR and DTDRRAKQGELKRD. The segment at 382–411 is disordered; the sequence is SESVSRGREPRALGAEDTDRRAKQGELKRD.

This sequence belongs to the peptidase C19 family. USP17 subfamily.

It localises to the nucleus. The protein resides in the endoplasmic reticulum. It carries out the reaction Thiol-dependent hydrolysis of ester, thioester, amide, peptide and isopeptide bonds formed by the C-terminal Gly of ubiquitin (a 76-residue protein attached to proteins as an intracellular targeting signal).. In terms of biological role, deubiquitinating enzyme that removes conjugated ubiquitin from specific proteins to regulate different cellular processes that may include cell proliferation, progression through the cell cycle, apoptosis, cell migration, and the cellular response to viral infection. This is Ubiquitin carboxyl-terminal hydrolase 17-like protein 1 (USP17L1) from Homo sapiens (Human).